Reading from the N-terminus, the 286-residue chain is 4-diphosphocytidyl-2-C-methyl-D-erythritol kinase (286 aa).

Lys-11 is a catalytic residue. Residue 93–103 coordinates ATP; it reads PFGAGLGGGSS. Asp-135 is an active-site residue.

This sequence belongs to the GHMP kinase family. IspE subfamily.

The enzyme catalyses 4-CDP-2-C-methyl-D-erythritol + ATP = 4-CDP-2-C-methyl-D-erythritol 2-phosphate + ADP + H(+). The protein operates within isoprenoid biosynthesis; isopentenyl diphosphate biosynthesis via DXP pathway; isopentenyl diphosphate from 1-deoxy-D-xylulose 5-phosphate: step 3/6. In terms of biological role, catalyzes the phosphorylation of the position 2 hydroxy group of 4-diphosphocytidyl-2C-methyl-D-erythritol. This is 4-diphosphocytidyl-2-C-methyl-D-erythritol kinase from Chlorobaculum parvum (strain DSM 263 / NCIMB 8327) (Chlorobium vibrioforme subsp. thiosulfatophilum).